The sequence spans 515 residues: Glucose-6-phosphate 1-dehydrogenase (515 aa).

An N-acetylalanine modification is found at Ala-2. Ser-8 bears the Phosphoserine mark. Phosphothreonine is present on Thr-10. Residues 38 to 45 (GASGDLAK) and Arg-72 each bind NADP(+). Residue Lys-89 is modified to N6-acetyllysine. NADP(+)-binding residues include Tyr-147 and Lys-171. D-glucose 6-phosphate is bound by residues Lys-171, 201 to 205 (HYLGK), Glu-239, and Asp-258. Lys-171 is subject to N6-(2-hydroxyisobutyryl)lysine; alternate. An N6-acetyllysine; alternate modification is found at Lys-171. His-263 functions as the Proton acceptor in the catalytic mechanism. An NADP(+)-binding site is contributed by Arg-357. Residues Lys-360 and Arg-365 each coordinate D-glucose 6-phosphate. NADP(+)-binding residues include Lys-366, Arg-370, and Arg-393. Position 395 (Gln-395) interacts with D-glucose 6-phosphate. Residues 401–403 (YTK) and 421–423 (DLT) each bind NADP(+). Lys-403 carries the N6-acetyllysine modification. Lys-432 carries the N6-acetyllysine modification. Arg-487 contacts NADP(+). Lys-497 is modified (N6-acetyllysine). Tyr-503 and Trp-509 together coordinate NADP(+). Tyr-503 is modified (phosphotyrosine).

It belongs to the glucose-6-phosphate dehydrogenase family. Homotetramer; dimer of dimers. Interacts with SIRT2; the interaction is enhanced by H(2)O(2) treatment. Forms a ternary complex with ALDOB and TP53; this interaction is direct. ALDOB stabilizes the complex inhibiting G6PD activity and keeping oxidative pentose phosphate metabolism in check. Post-translationally, acetylated by ELP3 at Lys-403; acetylation inhibits its homodimerization and enzyme activity. Deacetylated by SIRT2 at Lys-403; deacetylation stimulates its enzyme activity.

The protein localises to the cytoplasm. It localises to the cytosol. Its subcellular location is the membrane. The enzyme catalyses D-glucose 6-phosphate + NADP(+) = 6-phospho-D-glucono-1,5-lactone + NADPH + H(+). Its pathway is carbohydrate degradation; pentose phosphate pathway; D-ribulose 5-phosphate from D-glucose 6-phosphate (oxidative stage): step 1/3. In terms of biological role, cytosolic glucose-6-phosphate dehydrogenase that catalyzes the first and rate-limiting step of the oxidative branch within the pentose phosphate pathway/shunt, an alternative route to glycolysis for the dissimilation of carbohydrates and a major source of reducing power and metabolic intermediates for fatty acid and nucleic acid biosynthetic processes. This chain is Glucose-6-phosphate 1-dehydrogenase (G6PD), found in Cricetulus griseus (Chinese hamster).